Reading from the N-terminus, the 195-residue chain is TM2 domain-containing protein C41D11.9 (195 aa).

An N-terminal signal peptide occupies residues 1–20; the sequence is MLHKILFLICLASFIPTIGS. At 21-136 the chain is on the extracellular side; that stretch reads ISGTKDVKSK…NWSSGYSWTK (116 aa). Residues N55, N93, and N127 are each glycosylated (N-linked (GlcNAc...) asparagine). The 49-residue stretch at 131–179 folds into the TM2 domain; that stretch reads GYSWTKTMILSVVLGGFGADRFYLGLWKSAIGKLFSFGGLGVWTLVDVV. A helical membrane pass occupies residues 137-157; sequence TMILSVVLGGFGADRFYLGLW. Residues 158-163 are Cytoplasmic-facing; the sequence is KSAIGK. A helical membrane pass occupies residues 164–184; that stretch reads LFSFGGLGVWTLVDVVLIAVG. Residues 185 to 195 are Extracellular-facing; sequence YIKPYDGSMYI.

Belongs to the TM2 family.

It localises to the membrane. The polypeptide is TM2 domain-containing protein C41D11.9 (Caenorhabditis elegans).